Here is an 87-residue protein sequence, read N- to C-terminus: Large ribosomal subunit protein bL27 (87 aa).

The disordered stretch occupies residues 1–21; that stretch reads MAHKKGQGSTQNNRDSAGRRL.

Belongs to the bacterial ribosomal protein bL27 family.

The chain is Large ribosomal subunit protein bL27 from Nautilia profundicola (strain ATCC BAA-1463 / DSM 18972 / AmH).